We begin with the raw amino-acid sequence, 360 residues long: Malonyl CoA-acyl carrier protein transacylase, mitochondrial (360 aa).

A mitochondrion-targeting transit peptide spans 1-24; it reads MKLLTFPGQGTSISISILKAIIRN. Active-site residues include Ser105 and His235.

This sequence belongs to the FabD family.

It is found in the mitochondrion. The catalysed reaction is holo-[ACP] + malonyl-CoA = malonyl-[ACP] + CoA. It functions in the pathway lipid metabolism; fatty acid biosynthesis. Its function is as follows. Involved in biosynthesis of fatty acids in mitochondria. In Saccharomyces cerevisiae (strain ATCC 204508 / S288c) (Baker's yeast), this protein is Malonyl CoA-acyl carrier protein transacylase, mitochondrial (MCT1).